The following is a 75-amino-acid chain: Large ribosomal subunit protein bL28 (75 aa).

It belongs to the bacterial ribosomal protein bL28 family.

The polypeptide is Large ribosomal subunit protein bL28 (Buchnera aphidicola subsp. Acyrthosiphon pisum (strain 5A)).